Here is a 158-residue protein sequence, read N- to C-terminus: C-type lectin (158 aa).

A signal peptide spans 1-23 (MGHFTFISLCLMPIFLSLSGAEC). Cystine bridges form between Cys-26–Cys-37, Cys-54–Cys-154, Cys-61–Cys-156, and Cys-129–Cys-146. Residues 33–155 (RNGLCYKLFD…CESLFAFICR (123 aa)) enclose the C-type lectin domain. 2 N-linked (GlcNAc...) asparagine glycosylation sites follow: Asn-111 and Asn-121. A Mannose-binding motif is present at residues 119-121 (EPN). Positions 127, 142, and 143 each coordinate Ca(2+).

The protein belongs to the true venom lectin family. As to quaternary structure, homodimer; non-covalently linked. Expressed by the venom gland.

It localises to the secreted. In terms of biological role, mannose-binding lectin which recognizes specific carbohydrate structures and agglutinates a variety of animal cells by binding to cell-surface glycoproteins and glycolipids. May be a calcium-dependent lectin. This is C-type lectin from Micrurus corallinus (Brazilian coral snake).